The sequence spans 886 residues: Kinesin-like protein KIF18A (886 aa).

The Kinesin motor domain occupies 11–355 (RMKVVVRVRP…LKYANRAKEI (345 aa)). Lys-24 participates in a covalent cross-link: Glycyl lysine isopeptide (Lys-Gly) (interchain with G-Cter in SUMO2). 113–120 (GATGSGKT) lines the ATP pocket. A coiled-coil region spans residues 370 to 404 (ISQYVKICNMQKAEILMLKEKLKAYEEQKALSDRN). Ser-674 bears the Phosphoserine mark. Lys-683 is covalently cross-linked (Glycyl lysine isopeptide (Lys-Gly) (interchain with G-Cter in SUMO2)). A Phosphoserine modification is found at Ser-695. The disordered stretch occupies residues 774–804 (EQEPLASSKSSVHRIESSSFSTKDSMPESAG). Lys-782 is covalently cross-linked (Glycyl lysine isopeptide (Lys-Gly) (interchain with G-Cter in SUMO2)). Ser-826 bears the Phosphoserine mark. Lys-862 is covalently cross-linked (Glycyl lysine isopeptide (Lys-Gly) (interchain with G-Cter in SUMO2)). The segment at 862-886 (KRNTNKTNSNMLRKFRRNTSKENVQ) is disordered.

Belongs to the TRAFAC class myosin-kinesin ATPase superfamily. Kinesin family. As to quaternary structure, interacts with CENPE and ESR1. In terms of processing, glycosylated. Ubiquitinated.

It is found in the cell projection. Its subcellular location is the ruffle. It localises to the cytoplasm. The protein localises to the nucleus. The protein resides in the cytoskeleton. It is found in the microtubule organizing center. Its subcellular location is the centrosome. Functionally, microtubule-depolymerizing kinesin which plays a role in chromosome congression by reducing the amplitude of preanaphase oscillations and slowing poleward movement during anaphase, thus suppressing chromosome movements. May stabilize the CENPE-BUB1B complex at the kinetochores during early mitosis and maintains CENPE levels at kinetochores during chromosome congression. The chain is Kinesin-like protein KIF18A (Kif18a) from Mus musculus (Mouse).